A 430-amino-acid polypeptide reads, in one-letter code: BSD domain-containing protein 1 (430 aa).

Residues Ser92 and Ser166 each carry the phosphoserine modification. The 53-residue stretch at 146–198 (WLSQFCLEEKKGEISELLVGSPSIRALYTKMVPAAVSHSEFWHRYFYKVHQLE) folds into the BSD domain. Disordered regions lie at residues 247–298 (STFP…APEA) and 319–398 (LAVD…WEKD). The span at 276-291 (PSESSESISLVTQIAN) shows a compositional bias: polar residues. A compositionally biased stretch (basic and acidic residues) spans 350–367 (PPARVETLREEAPTDLRV). Thr356 carries the post-translational modification Phosphothreonine. Residues 371-390 (NSDSGKSTPSNNGKKGSSTD) show a composition bias toward polar residues. A phosphoserine mark is found at Ser387, Ser388, and Ser418.

This is BSD domain-containing protein 1 (BSDC1) from Homo sapiens (Human).